The following is a 390-amino-acid chain: Tuftelin (390 aa).

Coiled coils occupy residues 88–126 (DKMI…KLDR) and 162–351 (DTCI…IEKQ). A disordered region spans residues 358 to 390 (STQARAKTENPGSIRISKPPSPKPMPVIRVVET).

It belongs to the tuftelin family. In terms of assembly, interacts with TFIP11. Expressed in the epidermis (at protein level). Present in the extracellular enamel and is mainly associated with the crystal component.

It localises to the secreted. Its function is as follows. Involved in the structural organization of the epidermis. Involved in the mineralization and structural organization of enamel. The sequence is that of Tuftelin (TUFT1) from Homo sapiens (Human).